A 264-amino-acid chain; its full sequence is Methionine aminopeptidase (264 aa).

His79 is a substrate binding site. Asp97, Asp108, and His171 together coordinate a divalent metal cation. Residue His178 coordinates substrate. A divalent metal cation contacts are provided by Glu204 and Glu235.

The protein belongs to the peptidase M24A family. Methionine aminopeptidase type 1 subfamily. In terms of assembly, monomer. Co(2+) serves as cofactor. Zn(2+) is required as a cofactor. Requires Mn(2+) as cofactor. The cofactor is Fe(2+).

It carries out the reaction Release of N-terminal amino acids, preferentially methionine, from peptides and arylamides.. Functionally, removes the N-terminal methionine from nascent proteins. The N-terminal methionine is often cleaved when the second residue in the primary sequence is small and uncharged (Met-Ala-, Cys, Gly, Pro, Ser, Thr, or Val). Requires deformylation of the N(alpha)-formylated initiator methionine before it can be hydrolyzed. The polypeptide is Methionine aminopeptidase (Salmonella typhi).